The chain runs to 499 residues: Glycerol kinase (499 aa).

Threonine 13 contacts ADP. Positions 13, 14, and 15 each coordinate ATP. Threonine 13 is a binding site for sn-glycerol 3-phosphate. Residue arginine 17 coordinates ADP. Residues arginine 83, glutamate 84, tyrosine 135, and aspartate 245 each contribute to the sn-glycerol 3-phosphate site. Glycerol-binding residues include arginine 83, glutamate 84, tyrosine 135, aspartate 245, and glutamine 246. Residues threonine 267 and glycine 310 each contribute to the ADP site. Residues threonine 267, glycine 310, glutamine 314, and alanine 411 each contribute to the ATP site. The ADP site is built by alanine 411 and asparagine 415.

The protein belongs to the FGGY kinase family.

It catalyses the reaction glycerol + ATP = sn-glycerol 3-phosphate + ADP + H(+). It participates in polyol metabolism; glycerol degradation via glycerol kinase pathway; sn-glycerol 3-phosphate from glycerol: step 1/1. Inhibited by fructose 1,6-bisphosphate (FBP). In terms of biological role, key enzyme in the regulation of glycerol uptake and metabolism. Catalyzes the phosphorylation of glycerol to yield sn-glycerol 3-phosphate. This chain is Glycerol kinase, found in Xylella fastidiosa (strain M23).